Here is a 498-residue protein sequence, read N- to C-terminus: MSLRNDEQTEKGAVVGKVDSQLSGPGQEEIIQVQTQKPFTTLSAIGIGYGVTNTAVGLLLVLGTGIPMGGSPVIFWGFLAMAAVGLATATTLSELISAIPHPGGQYIWVHKIAPERYRRGLSYATAMISWIAAIAIGASGNLAVPVNAFTIVTLLNPNFVYQRWMGFVVFQLINIVTCFGACFEYFLPKISKALLLVNVLSVSAIIITLFATAKTHTSAKDFFKVVNVSGWPNGVAFLIGLNGSNWCFSCLDVATHLAEEIPSPSTNIPKALIWTIVIAFSSGLLMILAVLVNVGPINTPDYSGLTVLHHITGSKAAAIGLWVPVLFLVFASVWSIQTWQSRLAWSISRESGFPLHRHFSKIFPAPFYTPIWSLIGSAIGTALFGCLYLASELAFNSLIATGILLQYASYSIPTILVLYRGRSKFQHGPFWYPKLGFMANIVMLAWTLVALIFYCFPVYSEVIPSQVNYVSAVLILIAILITSLWFLYAKKHYHVVEI.

Residues Met1–Glu10 show a composition bias toward basic and acidic residues. Residues Met1–Gln21 form a disordered region. 5 helical membrane passes run Leu42–Thr64, Leu79–Ile99, Ala126–Val146, Phe167–Leu187, and Ala193–Ala213. N-linked (GlcNAc...) asparagine glycosylation is found at Asn227 and Asn242. Helical transmembrane passes span Leu272–Val292, Ala316–Ile336, Pro370–Ala390, Leu398–Leu418, Gly436–Phe456, and Tyr469–Ala489.

The protein belongs to the amino acid-polyamine-organocation (APC) superfamily. Amino acid/choline transporter (ACT) (TC 2.A.3.4) family.

The protein resides in the membrane. Functionally, transmembrane transporter; part of the gene cluster that mediates the biosynthesis of swainsonine, a cytotoxic fungal alkaloid and a potential cancer therapy drug. Does not mediate the secretion of SW and the exact role of swnT in SW biosynthesis remains to be determined. In Arthroderma benhamiae (strain ATCC MYA-4681 / CBS 112371) (Trichophyton mentagrophytes), this protein is Swainsonine transporter swnT.